Here is a 352-residue protein sequence, read N- to C-terminus: Aromatic amino acid aminotransferase (352 aa).

Lys-217 is subject to N6-(pyridoxal phosphate)lysine.

Belongs to the class-II pyridoxal-phosphate-dependent aminotransferase family. Homodimer. Pyridoxal 5'-phosphate is required as a cofactor.

It carries out the reaction an aromatic L-alpha-amino acid + 2-oxoglutarate = an aromatic oxo-acid + L-glutamate. Its function is as follows. Aminotransferase that catalyzes the conversion of aromatic amino acids and 2-oxoglutarate into corresponding aromatic oxo acids and L-glutamate. This Cutibacterium acnes (strain DSM 16379 / KPA171202) (Propionibacterium acnes) protein is Aromatic amino acid aminotransferase.